Here is a 160-residue protein sequence, read N- to C-terminus: Cytochrome b6-f complex subunit 4 (160 aa).

Helical transmembrane passes span 36–56 (LLYL…GLAV), 95–115 (LLGV…PFIE), and 131–151 (LVFI…CLPI).

It belongs to the cytochrome b family. PetD subfamily. In terms of assembly, the 4 large subunits of the cytochrome b6-f complex are cytochrome b6, subunit IV (17 kDa polypeptide, petD), cytochrome f and the Rieske protein, while the 4 small subunits are petG, petL, petM and petN. The complex functions as a dimer.

It localises to the plastid. The protein localises to the chloroplast thylakoid membrane. Component of the cytochrome b6-f complex, which mediates electron transfer between photosystem II (PSII) and photosystem I (PSI), cyclic electron flow around PSI, and state transitions. This chain is Cytochrome b6-f complex subunit 4, found in Thalassiosira pseudonana (Marine diatom).